A 614-amino-acid polypeptide reads, in one-letter code: Sodium- and chloride-dependent betaine transporter (614 aa).

Over 1–44 (MDRKVTVHEDGCPVVSWVPEEGEMMDQKDKDQVKDRGQWTNKME) the chain is Cytoplasmic. Transmembrane regions (helical) follow at residues 45–65 (FVLSVAGEIIGLGNVWRFPYL), 73–92 (AFFIPYFIFFFSCGIPVFFL), and 117–137 (GIGMASVVIESYLNIYYIIIL). Over 138–210 (AWALFYLFSS…SGIHDLGSLR (73 aa)) the chain is Extracellular. N171 and N183 each carry an N-linked (GlcNAc...) asparagine glycan. The next 9 membrane-spanning stretches (helical) occupy residues 211–229 (WELALCLLLAWIICYFCIW), 238–255 (VVYFTATFPYLMLIILLI), 291–308 (IFFSFAICQGCLTALGSY), 320–341 (IALCFLNSATSFVAGFVVFSIL), 374–393 (MPLSQLWSCLFFLMLLFLGL), 423–441 (LLILAVAIVCYLMGLLLVT), 458–478 (GICLLFLSLFEVICIGWVYGA), 499–518 (ISWLFLTPGLCLATFFFSLS), and 538–556 (IGWLLAFSSMACVPLFIII). Over 557–614 (TLLKTQGSFKKRLQRLITPDPSLPQPGRRSPQDGSSAQNCSTSPVKQELIAWEKETHL) the chain is Cytoplasmic. The disordered stretch occupies residues 574–600 (TPDPSLPQPGRRSPQDGSSAQNCSTSP). Position 586 is a phosphoserine (S586). Over residues 588–600 (QDGSSAQNCSTSP) the composition is skewed to polar residues.

This sequence belongs to the sodium:neurotransmitter symporter (SNF) (TC 2.A.22) family. SLC6A12 subfamily. As to quaternary structure, interacts with LIN7C.

It localises to the basolateral cell membrane. Its subcellular location is the cell membrane. It carries out the reaction 4-aminobutanoate(out) + chloride(out) + 3 Na(+)(out) = 4-aminobutanoate(in) + chloride(in) + 3 Na(+)(in). The catalysed reaction is glycine betaine(out) + 2 chloride(out) + 3 Na(+)(out) = glycine betaine(in) + 2 chloride(in) + 3 Na(+)(in). Functionally, transporter that mediates cellular uptake of betaine and GABA in a sodium- and chloride-dependent process. May have a role in regulation of GABAergic transmission in the brain through the reuptake of GABA into presynaptic terminals, as well as in osmotic regulation. Probably also involved in renal and hepatic osmotic regulation. The chain is Sodium- and chloride-dependent betaine transporter (Slc6a12) from Rattus norvegicus (Rat).